Here is a 248-residue protein sequence, read N- to C-terminus: Homeobox protein Hox-A4 (248 aa).

The tract at residues 23 to 107 (YQQSGYIPNP…PDGGAGANAS (85 aa)) is disordered. The span at 35 to 51 (YYERPKDTGFPHHDEPS) shows a compositional bias: basic and acidic residues. Positions 128–133 (VYPWMK) match the Antp-type hexapeptide motif. The segment at residues 149 to 208 (PKRSRTAYTRQQALELEKEFHFNRYLTRRRRVEIAHTMCLSERQVKIWFQNRRMKWKKEH) is a DNA-binding region (homeobox). The segment at 207–248 (EHKLPNTKIRSSSSASSSASGAQQQQIKTGQQLVPTPCTAGL) is disordered. A compositionally biased stretch (low complexity) spans 217 to 238 (SSSSASSSASGAQQQQIKTGQQ).

Belongs to the Antp homeobox family. Deformed subfamily.

The protein localises to the nucleus. Functionally, sequence-specific transcription factor which is part of a developmental regulatory system that provides cells with specific positional identities on the anterior-posterior axis. This chain is Homeobox protein Hox-A4 (hoxa4), found in Morone saxatilis (Striped bass).